Reading from the N-terminus, the 322-residue chain is MTGKLVERVHAINWNRLLDAKDLQVWERLTGNFWLPEKIPLSNDLASWQTLSSTEQQTTIRVFTGLTLLDTAQATVGAVAMIDDAVTPHEEAVLTNMAFMESVHAKSYSSIFSTLCSTKQIDDAFDWSEQNPYLQRKAQIIVDYYRGDDALKRKASSVMLESFLFYSGFYLPMYWSSRGKLTNTADLIRLIIRDEAVHGYYIGYKCQRGLADLTDAERADHREYTCELLHTLYANEIDYAHDLYDELGWTDDVLPYMRYNANKALANLGYQPAFDRDTCQVNPAVRAALDPGAGENHDFFSGSGSSYVMGTHQPTTDTDWDF.

Fe cation contacts are provided by Asp-70, Glu-101, and His-104. Residue Tyr-108 is part of the active site. Fe cation-binding residues include Glu-161, Glu-195, and His-198.

It belongs to the ribonucleoside diphosphate reductase small chain family. As to quaternary structure, tetramer of two alpha and two beta subunits. Requires Fe cation as cofactor.

It catalyses the reaction a 2'-deoxyribonucleoside 5'-diphosphate + [thioredoxin]-disulfide + H2O = a ribonucleoside 5'-diphosphate + [thioredoxin]-dithiol. Provides the precursors necessary for DNA synthesis. Catalyzes the biosynthesis of deoxyribonucleotides from the corresponding ribonucleotides. This Mycobacterium tuberculosis (strain CDC 1551 / Oshkosh) protein is Ribonucleoside-diphosphate reductase subunit beta nrdF1 (nrdF1).